The sequence spans 445 residues: Enolase 1 (445 aa).

Substrate contacts are provided by His164 and Glu173. Glu216 acts as the Proton donor in catalysis. Residues Asp251, Glu301, and Asp328 each coordinate Mg(2+). Positions 301 and 328 each coordinate substrate. Lys353 (proton acceptor) is an active-site residue. Substrate contacts are provided by residues 380-383 (SHRS) and Lys404.

Belongs to the enolase family. In terms of assembly, homodimer. It depends on Mg(2+) as a cofactor.

Its subcellular location is the cytoplasm. It carries out the reaction (2R)-2-phosphoglycerate = phosphoenolpyruvate + H2O. The protein operates within carbohydrate degradation; glycolysis; pyruvate from D-glyceraldehyde 3-phosphate: step 4/5. The sequence is that of Enolase 1 (ENO1) from Hevea brasiliensis (Para rubber tree).